The following is an 83-amino-acid chain: ATP synthase subunit c (83 aa).

2 helical membrane passes run 10-30 and 52-72; these read IAVALLIGMGALGTAIGFGLL and MFIVAGLLDAVTMIGVGIALF.

Belongs to the ATPase C chain family. As to quaternary structure, F-type ATPases have 2 components, F(1) - the catalytic core - and F(0) - the membrane proton channel. F(1) has five subunits: alpha(3), beta(3), gamma(1), delta(1), epsilon(1). F(0) has three main subunits: a(1), b(2) and c(10-14). The alpha and beta chains form an alternating ring which encloses part of the gamma chain. F(1) is attached to F(0) by a central stalk formed by the gamma and epsilon chains, while a peripheral stalk is formed by the delta and b chains.

It localises to the cell inner membrane. Its function is as follows. F(1)F(0) ATP synthase produces ATP from ADP in the presence of a proton or sodium gradient. F-type ATPases consist of two structural domains, F(1) containing the extramembraneous catalytic core and F(0) containing the membrane proton channel, linked together by a central stalk and a peripheral stalk. During catalysis, ATP synthesis in the catalytic domain of F(1) is coupled via a rotary mechanism of the central stalk subunits to proton translocation. In terms of biological role, key component of the F(0) channel; it plays a direct role in translocation across the membrane. A homomeric c-ring of between 10-14 subunits forms the central stalk rotor element with the F(1) delta and epsilon subunits. This is ATP synthase subunit c from Shewanella baltica (strain OS223).